A 245-amino-acid polypeptide reads, in one-letter code: 8-amino-3,8-dideoxy-manno-octulosonate cytidylyltransferase (245 aa).

This sequence belongs to the KdsB family.

It localises to the cytoplasm. It carries out the reaction 8-amino-3,8-dideoxy-alpha-D-manno-octulosonate + CTP = CMP-8-amino-3,8-dideoxy-alpha-D-manno-oct-2-ulosonate + diphosphate. The protein operates within bacterial outer membrane biogenesis; lipopolysaccharide biosynthesis. Functionally, activates KDO8N (a required 8-carbon sugar) for incorporation into bacterial lipopolysaccharide in the Shewanella genus. The polypeptide is 8-amino-3,8-dideoxy-manno-octulosonate cytidylyltransferase (Shewanella loihica (strain ATCC BAA-1088 / PV-4)).